The chain runs to 772 residues: Phosphoribosylformylglycinamidine synthase subunit PurL (772 aa).

Residue histidine 62 is part of the active site. ATP is bound by residues tyrosine 65 and lysine 109. Glutamate 111 lines the Mg(2+) pocket. Residues 112–115 (SHNH) and arginine 134 contribute to the substrate site. Catalysis depends on histidine 113, which acts as the Proton acceptor. Aspartate 135 is a Mg(2+) binding site. Glutamine 259 lines the substrate pocket. Aspartate 287 is a Mg(2+) binding site. Position 331 to 333 (331 to 333 (ESQ)) interacts with substrate. 2 residues coordinate ATP: aspartate 519 and glycine 556. Asparagine 557 is a binding site for Mg(2+). Serine 559 provides a ligand contact to substrate.

This sequence belongs to the FGAMS family. As to quaternary structure, monomer. Part of the FGAM synthase complex composed of 1 PurL, 1 PurQ and 2 PurS subunits.

Its subcellular location is the cytoplasm. It carries out the reaction N(2)-formyl-N(1)-(5-phospho-beta-D-ribosyl)glycinamide + L-glutamine + ATP + H2O = 2-formamido-N(1)-(5-O-phospho-beta-D-ribosyl)acetamidine + L-glutamate + ADP + phosphate + H(+). It participates in purine metabolism; IMP biosynthesis via de novo pathway; 5-amino-1-(5-phospho-D-ribosyl)imidazole from N(2)-formyl-N(1)-(5-phospho-D-ribosyl)glycinamide: step 1/2. Functionally, part of the phosphoribosylformylglycinamidine synthase complex involved in the purines biosynthetic pathway. Catalyzes the ATP-dependent conversion of formylglycinamide ribonucleotide (FGAR) and glutamine to yield formylglycinamidine ribonucleotide (FGAM) and glutamate. The FGAM synthase complex is composed of three subunits. PurQ produces an ammonia molecule by converting glutamine to glutamate. PurL transfers the ammonia molecule to FGAR to form FGAM in an ATP-dependent manner. PurS interacts with PurQ and PurL and is thought to assist in the transfer of the ammonia molecule from PurQ to PurL. This Leifsonia xyli subsp. xyli (strain CTCB07) protein is Phosphoribosylformylglycinamidine synthase subunit PurL.